Consider the following 485-residue polypeptide: Glutamyl-tRNA(Gln) amidotransferase subunit A (485 aa).

Residues Lys-79 and Ser-154 each act as charge relay system in the active site. Ser-178 acts as the Acyl-ester intermediate in catalysis.

The protein belongs to the amidase family. GatA subfamily. In terms of assembly, heterotrimer of A, B and C subunits.

The enzyme catalyses L-glutamyl-tRNA(Gln) + L-glutamine + ATP + H2O = L-glutaminyl-tRNA(Gln) + L-glutamate + ADP + phosphate + H(+). Allows the formation of correctly charged Gln-tRNA(Gln) through the transamidation of misacylated Glu-tRNA(Gln) in organisms which lack glutaminyl-tRNA synthetase. The reaction takes place in the presence of glutamine and ATP through an activated gamma-phospho-Glu-tRNA(Gln). In Staphylococcus carnosus (strain TM300), this protein is Glutamyl-tRNA(Gln) amidotransferase subunit A.